Here is a 124-residue protein sequence, read N- to C-terminus: Small ribosomal subunit protein bS6 (124 aa).

Residues 93 to 124 (KKAETGPSSMMKTVEREEARKAQQAEYAANNS) form a disordered region. The span at 105-115 (TVEREEARKAQ) shows a compositional bias: basic and acidic residues.

It belongs to the bacterial ribosomal protein bS6 family.

Binds together with bS18 to 16S ribosomal RNA. This is Small ribosomal subunit protein bS6 from Variovorax paradoxus (strain S110).